We begin with the raw amino-acid sequence, 202 residues long: LexA repressor (202 aa).

The H-T-H motif DNA-binding region spans 28–48 (RAEIAQQLGFRSPNAAEEHLK). Active-site for autocatalytic cleavage activity residues include Ser119 and Lys156.

Belongs to the peptidase S24 family. In terms of assembly, homodimer.

It catalyses the reaction Hydrolysis of Ala-|-Gly bond in repressor LexA.. Represses a number of genes involved in the response to DNA damage (SOS response), including recA and lexA. In the presence of single-stranded DNA, RecA interacts with LexA causing an autocatalytic cleavage which disrupts the DNA-binding part of LexA, leading to derepression of the SOS regulon and eventually DNA repair. This is LexA repressor from Pectobacterium atrosepticum (strain SCRI 1043 / ATCC BAA-672) (Erwinia carotovora subsp. atroseptica).